The chain runs to 341 residues: S-adenosylmethionine:tRNA ribosyltransferase-isomerase (341 aa).

This sequence belongs to the QueA family. Monomer.

The protein resides in the cytoplasm. It catalyses the reaction 7-aminomethyl-7-carbaguanosine(34) in tRNA + S-adenosyl-L-methionine = epoxyqueuosine(34) in tRNA + adenine + L-methionine + 2 H(+). It functions in the pathway tRNA modification; tRNA-queuosine biosynthesis. In terms of biological role, transfers and isomerizes the ribose moiety from AdoMet to the 7-aminomethyl group of 7-deazaguanine (preQ1-tRNA) to give epoxyqueuosine (oQ-tRNA). The polypeptide is S-adenosylmethionine:tRNA ribosyltransferase-isomerase (Clostridium botulinum (strain Loch Maree / Type A3)).